The primary structure comprises 639 residues: tRNA (uracil(54)-C(5))-methyltransferase (639 aa).

A disordered region spans residues V78 to A113. A phosphoserine mark is found at S92 and S93. Residues R101–A113 are compositionally biased toward basic residues. The TRAM domain occupies L163–D228. Q461, Y496, E517, and D564 together coordinate S-adenosyl-L-methionine. Catalysis depends on C591, which acts as the Nucleophile. The active-site Proton acceptor is E631.

It belongs to the class I-like SAM-binding methyltransferase superfamily. RNA M5U methyltransferase family.

It catalyses the reaction uridine(54) in tRNA + S-adenosyl-L-methionine = 5-methyluridine(54) in tRNA + S-adenosyl-L-homocysteine + H(+). Catalyzes the formation of 5-methyl-uridine at position 54 (m5U54) in all tRNA. May also have a role in tRNA stabilization or maturation. This Saccharomyces cerevisiae (strain ATCC 204508 / S288c) (Baker's yeast) protein is tRNA (uracil(54)-C(5))-methyltransferase (TRM2).